We begin with the raw amino-acid sequence, 212 residues long: Putative protein phosphatase 2C 53 (212 aa).

In terms of domain architecture, PPM-type phosphatase spans 1–208 (MEDRFSAITN…DDISVMLIPL (208 aa)). Residue Asp199 participates in Mn(2+) binding.

This sequence belongs to the PP2C family. Mg(2+) is required as a cofactor. Requires Mn(2+) as cofactor.

The catalysed reaction is O-phospho-L-seryl-[protein] + H2O = L-seryl-[protein] + phosphate. It carries out the reaction O-phospho-L-threonyl-[protein] + H2O = L-threonyl-[protein] + phosphate. In Arabidopsis thaliana (Mouse-ear cress), this protein is Putative protein phosphatase 2C 53.